The following is a 93-amino-acid chain: Putative pterin-4-alpha-carbinolamine dehydratase (93 aa).

Belongs to the pterin-4-alpha-carbinolamine dehydratase family.

The catalysed reaction is (4aS,6R)-4a-hydroxy-L-erythro-5,6,7,8-tetrahydrobiopterin = (6R)-L-erythro-6,7-dihydrobiopterin + H2O. The sequence is that of Putative pterin-4-alpha-carbinolamine dehydratase from Mycolicibacterium vanbaalenii (strain DSM 7251 / JCM 13017 / BCRC 16820 / KCTC 9966 / NRRL B-24157 / PYR-1) (Mycobacterium vanbaalenii).